A 239-amino-acid polypeptide reads, in one-letter code: 7-cyano-7-deazaguanine synthase (239 aa).

Residue 13–23 (FSGGQDSTTCL) coordinates ATP. C201, C216, C219, and C222 together coordinate Zn(2+).

This sequence belongs to the QueC family. The cofactor is Zn(2+).

It carries out the reaction 7-carboxy-7-deazaguanine + NH4(+) + ATP = 7-cyano-7-deazaguanine + ADP + phosphate + H2O + H(+). The protein operates within purine metabolism; 7-cyano-7-deazaguanine biosynthesis. Functionally, catalyzes the ATP-dependent conversion of 7-carboxy-7-deazaguanine (CDG) to 7-cyano-7-deazaguanine (preQ(0)). This is 7-cyano-7-deazaguanine synthase from Bradyrhizobium sp. (strain BTAi1 / ATCC BAA-1182).